The sequence spans 294 residues: Equatorin (294 aa).

Residues 1–14 (MNFILFIFIPGVFS) form the signal peptide. Residues 15–181 (LKSSTLKPTI…QPDLEDLKIK (167 aa)) lie on the Vesicular side of the membrane. Asparagine 76 carries an N-linked (GlcNAc...) asparagine glycan. Positions 107 to 126 (KSTIEEETTTSEPSHKNIQR) are disordered. An N-linked (GlcNAc...) asparagine glycan is attached at asparagine 143. Residues 182-202 (IMLGISLMTLLLFVVLLAFCS) form a helical membrane-spanning segment. The Cytoplasmic segment spans residues 203–294 (ATLYKLRHLS…MHENDESVTR (92 aa)).

In terms of assembly, interacts with SNAP25. Post-translationally, highly N- and O-glycosylated; contains sialic acid. In terms of tissue distribution, isoform 1 is highly expressed in testis. Isoform 2 is expressed at low levels in skin and blood.

It is found in the cytoplasmic vesicle. Its subcellular location is the secretory vesicle. The protein resides in the acrosome membrane. It localises to the acrosome inner membrane. The protein localises to the acrosome outer membrane. Functionally, acrosomal membrane-anchored protein involved in the process of fertilization and in acrosome biogenesis. The polypeptide is Equatorin (EQTN) (Homo sapiens (Human)).